Reading from the N-terminus, the 1040-residue chain is Multidrug resistance protein MdtB (1040 aa).

12 helical membrane-spanning segments follow: residues 16–36, 342–362, 369–389, 396–416, 440–460, 472–492, 537–557, 869–889, 890–910, 911–931, 968–988, and 998–1018; these read FIMR…AGII, DTQF…YVFL, IIPA…MVFL, LTLM…IVVI, IGFT…PLLF, FAVT…TLTP, WATL…WIVI, LIVA…ESFI, HPVT…LALM, LSGS…IGIV, ILMT…STGV, and IGMV…TPVI.

It belongs to the resistance-nodulation-cell division (RND) (TC 2.A.6) family. MdtB subfamily. Part of a tripartite efflux system composed of MdtA, MdtB and MdtC. MdtB forms a heteromultimer with MdtC.

Its subcellular location is the cell inner membrane. The sequence is that of Multidrug resistance protein MdtB from Enterobacter sp. (strain 638).